Consider the following 240-residue polypeptide: tRNA pseudouridine synthase B (240 aa).

Catalysis depends on Asp-54, which acts as the Nucleophile.

Belongs to the pseudouridine synthase TruB family. Type 1 subfamily.

The catalysed reaction is uridine(55) in tRNA = pseudouridine(55) in tRNA. In terms of biological role, responsible for synthesis of pseudouridine from uracil-55 in the psi GC loop of transfer RNAs. This is tRNA pseudouridine synthase B from Chlorobium phaeovibrioides (strain DSM 265 / 1930) (Prosthecochloris vibrioformis (strain DSM 265)).